A 716-amino-acid chain; its full sequence is tRNA(Met) cytidine acetyltransferase TmcA (716 aa).

Residues Gln-192, 217 to 226 (GRGKSYVIGL), and Arg-364 contribute to the ATP site. In terms of domain architecture, N-acetyltransferase spans 401 to 567 (REVLARDREV…KNVALAKPLD (167 aa)). Acetyl-CoA is bound by residues 493-495 (IAV) and 500-506 (QRRGLGS).

This sequence belongs to the RNA cytidine acetyltransferase family. TmcA subfamily.

The protein resides in the cytoplasm. The enzyme catalyses cytidine(34) in elongator tRNA(Met) + acetyl-CoA + ATP + H2O = N(4)-acetylcytidine(34) in elongator tRNA(Met) + ADP + phosphate + CoA + H(+). Functionally, catalyzes the formation of N(4)-acetylcytidine (ac(4)C) at the wobble position of tRNA(Met), by using acetyl-CoA as an acetyl donor and ATP (or GTP). The sequence is that of tRNA(Met) cytidine acetyltransferase TmcA from Aeropyrum pernix (strain ATCC 700893 / DSM 11879 / JCM 9820 / NBRC 100138 / K1).